We begin with the raw amino-acid sequence, 103 residues long: Histone H4 type VIII (103 aa).

Over residues M1–G14 the composition is skewed to gly residues. The interval M1–R20 is disordered. S2 carries the post-translational modification N-acetylserine. S2 is subject to Phosphoserine. An Asymmetric dimethylarginine; by PRMT1; alternate modification is found at R4. R4 carries the citrulline; alternate modification. R4 is modified (omega-N-methylarginine; by PRMT1; alternate). R4 carries the symmetric dimethylarginine; by PRMT5 and PRMT7; alternate modification. N6-(2-hydroxyisobutyryl)lysine; alternate occurs at positions 6, 9, 13, and 17. K6 carries the post-translational modification N6-acetyl-N6-methyllysine; alternate. N6-acetyllysine is present on residues K6, K9, K13, and K17. An N6-butyryllysine; alternate mark is found at K6, K9, K13, and K17. N6-glutaryllysine; alternate is present on K6. K6, K9, K13, and K17 each carry N6-lactoyllysine; alternate. The residue at position 9 (K9) is an N6-propionyllysine; alternate. K13 carries the N6-acetyl-N6-methyllysine; alternate modification. K13 is modified (N6-glutaryllysine; alternate). K13 is modified (N6-methyllysine; alternate). K17 is modified (N6-propionyllysine; alternate). An N6-methyllysine; alternate modification is found at K21. K21 is modified (N6,N6,N6-trimethyllysine; alternate). K21 carries the post-translational modification N6,N6-dimethyllysine; alternate. An N6-(2-hydroxyisobutyryl)lysine; alternate mark is found at K32 and K45. The residue at position 32 (K32) is an N6-acetyllysine. N6-butyryllysine; alternate is present on residues K32 and K45. K32 is modified (N6-glutaryllysine; alternate). K32 is modified (N6-lactoyllysine; alternate). Residues K32 and K45 each carry the N6-propionyllysine; alternate modification. The residue at position 32 (K32) is an N6-succinyllysine; alternate. A Glycyl lysine isopeptide (Lys-Gly) (interchain with G-Cter in UFM1); alternate cross-link involves residue K32. S48 carries the phosphoserine modification. Y52 is modified (phosphotyrosine). Position 60 is an N6-acetyllysine (K60). An N6-glutaryllysine; alternate mark is found at K60, K78, and K80. K60 bears the N6-(2-hydroxyisobutyryl)lysine mark. 2 positions are modified to N6-(2-hydroxyisobutyryl)lysine; alternate: K78 and K80. N6-butyryllysine; alternate is present on residues K78 and K80. K78 is modified (N6-lactoyllysine; alternate). N6-propionyllysine; alternate is present on residues K78 and K80. The residue at position 78 (K78) is an N6-succinyllysine. K80 is modified (N6-acetyllysine). A Phosphotyrosine modification is found at Y89. The residue at position 92 (K92) is an N6-(2-hydroxyisobutyryl)lysine; alternate. K92 carries the N6-butyryllysine; alternate modification. K92 is subject to N6-glutaryllysine; alternate. Position 92 is an N6-lactoyllysine; alternate (K92). At K92 the chain carries N6-propionyllysine; alternate. An N6-succinyllysine; alternate modification is found at K92. At K92 the chain carries N6-acetyllysine; alternate. Residue K92 forms a Glycyl lysine isopeptide (Lys-Gly) (interchain with G-Cter in ubiquitin); alternate linkage.

It belongs to the histone H4 family. In terms of assembly, the nucleosome is a histone octamer containing two molecules each of H2A, H2B, H3 and H4 assembled in one H3-H4 heterotetramer and two H2A-H2B heterodimers. The octamer wraps approximately 147 bp of DNA. Acetylation at Lys-6 (H4K5ac), Lys-9 (H4K8ac), Lys-13 (H4K12ac) and Lys-17 (H4K16ac) occurs in coding regions of the genome but not in heterochromatin. Post-translationally, citrullination at Arg-4 (H4R3ci) by PADI4 impairs methylation. In terms of processing, monomethylation and asymmetric dimethylation at Arg-4 (H4R3me1 and H4R3me2a, respectively) by PRMT1 favors acetylation at Lys-9 (H4K8ac) and Lys-13 (H4K12ac). Demethylation is performed by JMJD6. Symmetric dimethylation on Arg-4 (H4R3me2s) by the PRDM1/PRMT5 complex may play a crucial role in the germ-cell lineage. Monomethylated, dimethylated or trimethylated at Lys-21 (H4K20me1, H4K20me2, H4K20me3). Monomethylation is performed by KMT5A/SET8. Trimethylation is performed by KMT5B and KMT5C and induces gene silencing. Monomethylated at Lys-13 (H4K12me1) by N6AMT1; H4K12me1 modification is present at the promoters of numerous genes encoding cell cycle regulators. Post-translationally, acetyl-methylated at Lys-6 and Lys-13 (H4K5acme and H4K12acme, respectively), acetyl-methylation is an epigenetic mark of active chromatin associated with increased transcriptional initiation. Acetyl-methylation is formed by acetylation by EP300/p300 of lysine residues that are already monomethylated on the same side chain. H4K5acme and H4K12acme marks specifically bind BRD2. In terms of processing, ubiquitinated by the CUL4-DDB-RBX1 complex in response to ultraviolet irradiation. This may weaken the interaction between histones and DNA and facilitate DNA accessibility to repair proteins. Monoubiquitinated at Lys-92 of histone H4 (H4K91ub1) in response to DNA damage. The exact role of H4K91ub1 in DNA damage response is still unclear but it may function as a licensing signal for additional histone H4 post-translational modifications such as H4 Lys-21 methylation (H4K20me). Sumoylated, which is associated with transcriptional repression. Post-translationally, butyrylation of histones marks active promoters and competes with histone acetylation. In terms of processing, glutarylation at Lys-92 (H4K91glu) destabilizes nucleosomes by promoting dissociation of the H2A-H2B dimers from nucleosomes. Ufmylated; monofmylated by UFL1 at Lys-32 (H4K31Ufm1) in response to DNA damage. Post-translationally, lactylated in macrophages by EP300/P300 by using lactoyl-CoA directly derived from endogenous or exogenous lactate, leading to stimulates gene transcription. Delactylated by SIRT3 at Lys-17 (H4K16la).

It localises to the nucleus. The protein localises to the chromosome. Core component of nucleosome. Nucleosomes wrap and compact DNA into chromatin, limiting DNA accessibility to the cellular machineries which require DNA as a template. Histones thereby play a central role in transcription regulation, DNA repair, DNA replication and chromosomal stability. DNA accessibility is regulated via a complex set of post-translational modifications of histones, also called histone code, and nucleosome remodeling. In Gallus gallus (Chicken), this protein is Histone H4 type VIII (H4-VIII).